A 154-amino-acid chain; its full sequence is UPF0039 protein sll0451 (154 aa).

In terms of domain architecture, N-acetyltransferase spans 8–151 (QRFNDISGEA…EHISMIFRVP (144 aa)).

It belongs to the UPF0039 (ElaA) family.

This is UPF0039 protein sll0451 from Synechocystis sp. (strain ATCC 27184 / PCC 6803 / Kazusa).